The chain runs to 209 residues: Protein N-terminal glutamine amidohydrolase (209 aa).

Active-site residues include Cys-30, His-83, and Asp-99.

The protein belongs to the NTAQ1 family. In terms of assembly, monomer. As to expression, widely expressed.

The protein resides in the cytoplasm. It localises to the cytosol. It is found in the nucleus. It catalyses the reaction N-terminal L-glutaminyl-[protein] + H2O = N-terminal L-glutamyl-[protein] + NH4(+). Its function is as follows. Mediates the side-chain deamidation of N-terminal glutamine residues to glutamate, an important step in N-end rule pathway of protein degradation. Conversion of the resulting N-terminal glutamine to glutamate renders the protein susceptible to arginylation, polyubiquitination and degradation as specified by the N-end rule. Does not act on substrates with internal or C-terminal glutamine and does not act on non-glutamine residues in any position. Does not deaminate acetylated N-terminal glutamine. With the exception of proline, all tested second-position residues on substrate peptides do not greatly influence the activity. In contrast, a proline at position 2, virtually abolishes deamidation of N-terminal glutamine. The sequence is that of Protein N-terminal glutamine amidohydrolase (Ntaq1) from Mus musculus (Mouse).